The sequence spans 688 residues: Homoaconitase, mitochondrial (688 aa).

A mitochondrion-targeting transit peptide spans 1 to 19; the sequence is MALLYLSTRSSLKKTGARC. The [4Fe-4S] cluster site is built by Cys346, Cys406, and Cys409.

Belongs to the aconitase/IPM isomerase family. [4Fe-4S] cluster serves as cofactor.

It is found in the mitochondrion. It carries out the reaction (2R,3S)-homoisocitrate = cis-homoaconitate + H2O. The protein operates within amino-acid biosynthesis; L-lysine biosynthesis via AAA pathway; L-alpha-aminoadipate from 2-oxoglutarate: step 3/5. In terms of biological role, catalyzes the reversible hydration of cis-homoaconitate to (2R,3S)-homoisocitrate, a step in the alpha-aminoadipate pathway for lysine biosynthesis. In Debaryomyces hansenii (strain ATCC 36239 / CBS 767 / BCRC 21394 / JCM 1990 / NBRC 0083 / IGC 2968) (Yeast), this protein is Homoaconitase, mitochondrial (LYS4).